The sequence spans 727 residues: Glucans biosynthesis glucosyltransferase H (727 aa).

A disordered region spans residues 18 to 38; the sequence is SAMPNERPGAMEPQNLSKMPE. 7 consecutive transmembrane segments (helical) span residues 58–78, 97–117, 278–298, 408–428, 460–480, 496–516, and 572–592; these read FLVV…MGAV, VNFC…LILL, LQQF…GWWV, IMAY…LMLA, LFYI…LLLL, IFSV…MMFI, and LLAW…ISAW.

It belongs to the glycosyltransferase 2 family. OpgH subfamily.

Its subcellular location is the cell inner membrane. Its pathway is glycan metabolism; osmoregulated periplasmic glucan (OPG) biosynthesis. Involved in the biosynthesis of osmoregulated periplasmic glucans (OPGs). The sequence is that of Glucans biosynthesis glucosyltransferase H from Shewanella baltica (strain OS223).